A 146-amino-acid polypeptide reads, in one-letter code: Deoxyuridine 5'-triphosphate nucleotidohydrolase (146 aa).

Residues 65–67 (RSG), N78, and 82–84 (TID) each bind substrate.

It belongs to the dUTPase family. Requires Mg(2+) as cofactor.

The enzyme catalyses dUTP + H2O = dUMP + diphosphate + H(+). It functions in the pathway pyrimidine metabolism; dUMP biosynthesis; dUMP from dCTP (dUTP route): step 2/2. Functionally, this enzyme is involved in nucleotide metabolism: it produces dUMP, the immediate precursor of thymidine nucleotides and it decreases the intracellular concentration of dUTP so that uracil cannot be incorporated into DNA. The chain is Deoxyuridine 5'-triphosphate nucleotidohydrolase from Treponema pallidum subsp. pallidum (strain SS14).